Here is a 227-residue protein sequence, read N- to C-terminus: Phosphatidylserine decarboxylase proenzyme (227 aa).

The active-site Schiff-base intermediate with substrate; via pyruvic acid is S184. S184 carries the pyruvic acid (Ser); by autocatalysis modification.

This sequence belongs to the phosphatidylserine decarboxylase family. PSD-A subfamily. Heterodimer of a large membrane-associated beta subunit and a small pyruvoyl-containing alpha subunit. Requires pyruvate as cofactor. Is synthesized initially as an inactive proenzyme. Formation of the active enzyme involves a self-maturation process in which the active site pyruvoyl group is generated from an internal serine residue via an autocatalytic post-translational modification. Two non-identical subunits are generated from the proenzyme in this reaction, and the pyruvate is formed at the N-terminus of the alpha chain, which is derived from the carboxyl end of the proenzyme. The post-translation cleavage follows an unusual pathway, termed non-hydrolytic serinolysis, in which the side chain hydroxyl group of the serine supplies its oxygen atom to form the C-terminus of the beta chain, while the remainder of the serine residue undergoes an oxidative deamination to produce ammonia and the pyruvoyl prosthetic group on the alpha chain.

The protein localises to the cell membrane. The enzyme catalyses a 1,2-diacyl-sn-glycero-3-phospho-L-serine + H(+) = a 1,2-diacyl-sn-glycero-3-phosphoethanolamine + CO2. It participates in phospholipid metabolism; phosphatidylethanolamine biosynthesis; phosphatidylethanolamine from CDP-diacylglycerol: step 2/2. Functionally, catalyzes the formation of phosphatidylethanolamine (PtdEtn) from phosphatidylserine (PtdSer). The chain is Phosphatidylserine decarboxylase proenzyme from Ehrlichia ruminantium (strain Welgevonden).